Here is a 923-residue protein sequence, read N- to C-terminus: RNA polymerase-associated protein RapA (923 aa).

The region spanning 162–332 (EVGNRVNPRV…FARLRLLDPE (171 aa)) is the Helicase ATP-binding domain. 175-182 (DEVGLGKT) serves as a coordination point for ATP. Residues 278-281 (DEAH) carry the DEAH box motif. One can recognise a Helicase C-terminal domain in the interval 443–597 (KIDWLIDFLK…TCPMGMALFS (155 aa)).

This sequence belongs to the SNF2/RAD54 helicase family. RapA subfamily. As to quaternary structure, interacts with the RNAP. Has a higher affinity for the core RNAP than for the holoenzyme. Its ATPase activity is stimulated by binding to RNAP.

Its function is as follows. Transcription regulator that activates transcription by stimulating RNA polymerase (RNAP) recycling in case of stress conditions such as supercoiled DNA or high salt concentrations. Probably acts by releasing the RNAP, when it is trapped or immobilized on tightly supercoiled DNA. Does not activate transcription on linear DNA. Probably not involved in DNA repair. The polypeptide is RNA polymerase-associated protein RapA (Haemophilus influenzae (strain ATCC 51907 / DSM 11121 / KW20 / Rd)).